A 349-amino-acid chain; its full sequence is Flap endonuclease 1-B (349 aa).

The segment at 1-105 (MGIKGLTKLL…GELAKRLARR (105 aa)) is N-domain. Position 34 (D34) interacts with Mg(2+). R71 is a binding site for DNA. The Mg(2+) site is built by D87, E159, E161, D180, and D182. The tract at residues 123–254 (DMEKYSKRTV…QTALKLIRQH (132 aa)) is I-domain. DNA is bound at residue E159. DNA contacts are provided by G232 and D234. Mg(2+) is bound at residue D234.

It belongs to the XPG/RAD2 endonuclease family. FEN1 subfamily. Interacts with PCNA. Three molecules of FEN1 bind to one PCNA trimer with each molecule binding to one PCNA monomer. PCNA stimulates the nuclease activity without altering cleavage specificity. Mg(2+) is required as a cofactor. Post-translationally, phosphorylated. Phosphorylation upon DNA damage induces relocalization to the nuclear plasma.

The protein resides in the nucleus. The protein localises to the nucleolus. It is found in the nucleoplasm. Its subcellular location is the mitochondrion. Functionally, structure-specific nuclease with 5'-flap endonuclease and 5'-3' exonuclease activities involved in DNA replication and repair. During DNA replication, cleaves the 5'-overhanging flap structure that is generated by displacement synthesis when DNA polymerase encounters the 5'-end of a downstream Okazaki fragment. It enters the flap from the 5'-end and then tracks to cleave the flap base, leaving a nick for ligation. Also involved in the long patch base excision repair (LP-BER) pathway, by cleaving within the apurinic/apyrimidinic (AP) site-terminated flap. Acts as a genome stabilization factor that prevents flaps from equilibrating into structures that lead to duplications and deletions. Also possesses 5'-3' exonuclease activity on nicked or gapped double-stranded DNA, and exhibits RNase H activity. Also involved in replication and repair of rDNA and in repairing mitochondrial DNA. The polypeptide is Flap endonuclease 1-B (Physcomitrium patens (Spreading-leaved earth moss)).